The sequence spans 201 residues: Probable molybdenum cofactor guanylyltransferase (201 aa).

Residues 6–8 (LAG), Lys-18, Asp-65, and Asp-97 contribute to the GTP site. A Mg(2+)-binding site is contributed by Asp-97.

Belongs to the MobA family. It depends on Mg(2+) as a cofactor.

It is found in the cytoplasm. It catalyses the reaction Mo-molybdopterin + GTP + H(+) = Mo-molybdopterin guanine dinucleotide + diphosphate. Functionally, transfers a GMP moiety from GTP to Mo-molybdopterin (Mo-MPT) cofactor (Moco or molybdenum cofactor) to form Mo-molybdopterin guanine dinucleotide (Mo-MGD) cofactor. The sequence is that of Probable molybdenum cofactor guanylyltransferase from Staphylococcus haemolyticus (strain JCSC1435).